Reading from the N-terminus, the 405-residue chain is Tyrosine-protein phosphatase non-receptor type eak-6 (405 aa).

Positions I30 to Y309 constitute a Tyrosine-protein phosphatase domain. C248 (phosphocysteine intermediate) is an active-site residue.

It belongs to the protein-tyrosine phosphatase family. Expressed in the 2 embryonic head hypodermal cells XXXL/R.

The protein resides in the cytoplasm. It localises to the cell membrane. It catalyses the reaction O-phospho-L-tyrosyl-[protein] + H2O = L-tyrosyl-[protein] + phosphate. Functionally, putative phosphatase which, together with eak-4 and sdf-9, negatively regulates dauer larva formation downstream of insulin-like receptor daf-2 and in parallel of age-1, pdk-1 and akt-1. The chain is Tyrosine-protein phosphatase non-receptor type eak-6 from Caenorhabditis elegans.